Reading from the N-terminus, the 776-residue chain is Meiotic expression up-regulated protein 1/2 (776 aa).

Coiled coils occupy residues 87-122 (YVLKVAEEKIEKLLKENGTLKNEEKCLRMQIVAQEE), 173-227 (FSEL…DLKE), 265-307 (YKVE…NDEE), 362-430 (KMSQ…RNNS), and 496-595 (INNQ…NTEL).

In Schizosaccharomyces pombe (strain 972 / ATCC 24843) (Fission yeast), this protein is Meiotic expression up-regulated protein 1/2 (meu1).